A 112-amino-acid polypeptide reads, in one-letter code: Ferredoxin, plant-type (112 aa).

In terms of domain architecture, 2Fe-2S ferredoxin-type spans 6–97 (YEVFEVLSGQ…DLTIEYFRHV (92 aa)). C41, C46, C49, and C81 together coordinate [2Fe-2S] cluster.

The protein belongs to the 2Fe2S plant-type ferredoxin family.

It functions in the pathway aromatic compound metabolism; catechol degradation. Ferredoxins are iron-sulfur proteins that transfer electrons in a wide variety of metabolic reactions. This chain is Ferredoxin, plant-type (xylT), found in Pseudomonas putida (Arthrobacter siderocapsulatus).